Reading from the N-terminus, the 486-residue chain is Protein nucleotidyltransferase YdiU (486 aa).

Positions 90, 92, 93, 113, 125, 126, 176, and 183 each coordinate ATP. Residue D252 is the Proton acceptor of the active site. Residues N253 and D262 each coordinate Mg(2+). D262 serves as a coordination point for ATP.

This sequence belongs to the SELO family. The cofactor is Mg(2+). Requires Mn(2+) as cofactor.

The catalysed reaction is L-seryl-[protein] + ATP = 3-O-(5'-adenylyl)-L-seryl-[protein] + diphosphate. It carries out the reaction L-threonyl-[protein] + ATP = 3-O-(5'-adenylyl)-L-threonyl-[protein] + diphosphate. It catalyses the reaction L-tyrosyl-[protein] + ATP = O-(5'-adenylyl)-L-tyrosyl-[protein] + diphosphate. The enzyme catalyses L-histidyl-[protein] + UTP = N(tele)-(5'-uridylyl)-L-histidyl-[protein] + diphosphate. The catalysed reaction is L-seryl-[protein] + UTP = O-(5'-uridylyl)-L-seryl-[protein] + diphosphate. It carries out the reaction L-tyrosyl-[protein] + UTP = O-(5'-uridylyl)-L-tyrosyl-[protein] + diphosphate. Functionally, nucleotidyltransferase involved in the post-translational modification of proteins. It can catalyze the addition of adenosine monophosphate (AMP) or uridine monophosphate (UMP) to a protein, resulting in modifications known as AMPylation and UMPylation. The sequence is that of Protein nucleotidyltransferase YdiU from Stutzerimonas stutzeri (strain A1501) (Pseudomonas stutzeri).